A 226-amino-acid polypeptide reads, in one-letter code: MPTTKKTLMFLSSFFTSLGSFIVICSILGTQAWITSTIAVRDSASNGSIFITYGLFRGESSEELSHGLAEPKKKFAVLEILNNSSQKTLHSVTILFLVLSLITSLLSSGFTFYNSISNPYQTFLGPTGVYTWNGLGASFVFVTMILFVANTQSNQLSEELFQMLYPATTSKGTTHSYGYSFWLILLVILLNIVTVTIIIFYQKARYQRKQEQRKPMEYAPRDGILF.

A helical membrane pass occupies residues 8 to 28; that stretch reads LMFLSSFFTSLGSFIVICSIL. N-linked (GlcNAc...) asparagine glycosylation occurs at N83. The next 3 helical transmembrane spans lie at 92-112, 129-149, and 181-201; these read VTILFLVLSLITSLLSSGFTF, VYTWNGLGASFVFVTMILFVA, and FWLILLVILLNIVTVTIIIFY.

It belongs to the clarin family.

The protein localises to the membrane. The sequence is that of Clarin-3 (CLRN3) from Homo sapiens (Human).